A 190-amino-acid chain; its full sequence is CASP-like protein 5A3 (190 aa).

Composition is skewed to low complexity over residues 1–12 (MRASRPAVHPVE) and 20–31 (AAAEGPEAQVEG). The segment at 1–31 (MRASRPAVHPVEAAPPPPAAAAEGPEAQVEG) is disordered. At 1 to 50 (MRASRPAVHPVEAAPPPPAAAAEGPEAQVEGAAHPRGVRMKDPPGAPGTP) the chain is on the cytoplasmic side. The helical transmembrane segment at 51-71 (AGLGLRLAQAFFAAAALAVMA) threads the bilayer. Over 72–81 (STNDFPSVSA) the chain is Extracellular. A helical membrane pass occupies residues 82-102 (FSYLVAAAILQCLWSLLLAFV). At 103–126 (DIYALLVKRSLRNARAVCIFTIGD) the chain is on the cytoplasmic side. Residues 127–147 (GITGTITLGAACASAGITVLI) traverse the membrane as a helical segment. Residues 148 to 164 (GNDLNICAENHCASFET) are Extracellular-facing. A helical transmembrane segment spans residues 165-185 (ATALAFISWFALAPSCILNFW). The Cytoplasmic portion of the chain corresponds to 186 to 190 (SMASR).

The protein belongs to the Casparian strip membrane proteins (CASP) family. As to quaternary structure, homodimer and heterodimers.

It localises to the cell membrane. This chain is CASP-like protein 5A3, found in Zea mays (Maize).